Reading from the N-terminus, the 299-residue chain is Large ribosomal subunit protein uL29m (299 aa).

Belongs to the universal ribosomal protein uL29 family. As to quaternary structure, component of the mitochondrial large ribosomal subunit. Mature mitochondrial ribosomes consist of a small (37S) and a large (54S) subunit. The 37S subunit contains at least 33 different proteins and 1 molecule of RNA (15S). The 54S subunit contains at least 45 different proteins and 1 molecule of RNA (21S).

The protein resides in the mitochondrion. This chain is Large ribosomal subunit protein uL29m (MRPL4), found in Scheffersomyces stipitis (strain ATCC 58785 / CBS 6054 / NBRC 10063 / NRRL Y-11545) (Yeast).